The primary structure comprises 171 residues: Peptide methionine sulfoxide reductase MsrA (171 aa).

Cys13 is an active-site residue.

Belongs to the MsrA Met sulfoxide reductase family.

It catalyses the reaction L-methionyl-[protein] + [thioredoxin]-disulfide + H2O = L-methionyl-(S)-S-oxide-[protein] + [thioredoxin]-dithiol. The enzyme catalyses [thioredoxin]-disulfide + L-methionine + H2O = L-methionine (S)-S-oxide + [thioredoxin]-dithiol. Its function is as follows. Has an important function as a repair enzyme for proteins that have been inactivated by oxidation. Catalyzes the reversible oxidation-reduction of methionine sulfoxide in proteins to methionine. The chain is Peptide methionine sulfoxide reductase MsrA from Mycobacterium sp. (strain MCS).